The following is a 333-amino-acid chain: Homeobox protein SIX3 (333 aa).

The span at 57–71 shows a compositional bias: gly residues; that stretch reads GGAGGAGGGSGGGGS. Disordered stretches follow at residues 57-76, 233-252, and 259-333; these read GGAG…APPE, NPSK…TQVG, and RQRD…ECDV. The interaction with TLE5 stretch occupies residues 73–120; the sequence is APPEELSMFQLPTLNFSPEQVASVCETLEETGDIERLGRFLWSLPVAP. The homeobox DNA-binding region spans 207–266; that stretch reads GEQKTHCFKERTRSLLREWYLQDPYPNPSKKRELAQATGLTPTQVGNWFKNRRQRDRAAA. The bind to RHO promoter stretch occupies residues 233–235; sequence NPS. Over residues 294-310 the composition is skewed to low complexity; that stretch reads SAESPSTAASPTTSVSS. Residues 317–333 are compositionally biased toward polar residues; that stretch reads TGTSILSVTSSDSECDV.

Belongs to the SIX/Sine oculis homeobox family. In terms of assembly, interacts with EYA4; translocates EYA4 from the cytoplasm to the nucleus and promotes activation of their target genes. Interacts with MTA1 and HDAC2; represses its own transcription. Interacts with MTA1; facilitates the binding of SIX3 to the core DNA motif of SIX3 promoter. Interacts with EYA1; promotes EYA1 translocation to the nucleus. Interacts with TLE1 and TLE5 (via Q domain); can act in combination with either TLE1 and/or TLE5 leading to transcriptional repression or activation, respectively. Interacts (via homeobox) with NR4A3; differentially regulates the transcriptional activities NR4A3. Interacts with GMNN. Interacts with TLE4. Expressed in ependymal cells during the formation of the lateral wall.

The protein resides in the nucleus. Functionally, transcriptional regulator which can act as both a transcriptional repressor and activator by binding a ATTA homeodomain core recognition sequence on these target genes. During forebrain development represses WNT1 expression allowing zona limitans intrathalamica formation and thereby ensuring proper anterio-posterior patterning of the diencephalon and formation of the rostral diencephalon. Acts as a direct upstream activator of SHH expression in the rostral diencephalon ventral midline and that in turn SHH maintains its expression. In addition, Six3 activity is required for the formation of the telencephalon. During postnatal stages of brain development is necessary for ependymal cell maturation by promoting the maturation of radial glia into ependymal cells through regulation of neuroblast proliferation and migration. Acts on the proliferation and differentiation of neural progenitor cells through activating transcription of CCND1 AND CCND2. During early lens formation plays a role in lens induction and specification by activating directly PAX6 in the presumptive lens ectoderm. In turn PAX6 activates SIX3 resulting in activation of PDGFRA and CCND1 promoting cell proliferation. Also is required for the neuroretina development by directly suppressing WNT8B expression in the anterior neural plate territory. Its action during retina development and lens morphogenesis is TLE5 and TLE4-dependent manner. Furthermore, during eye development regulates several genes expression. Before and during early lens development represses the CRYGF promoter by binding a SIX repressor element. Directly activates RHO transcription, or cooperates with CRX or NRL. Six3 also functions in the formation of the proximodistal axis of the optic cup, and promotes the formation of optic vesicles-like structures. During pituitary development, acts in parallel or alternatively with HESX1 to control cell proliferation through Wnt/beta-catenin pathway. Plays a role in eye development by suppressing WNT1 expression and in dorsal-ventral patterning by repressing BMP signaling pathway. The chain is Homeobox protein SIX3 (Six3) from Mus musculus (Mouse).